Consider the following 187-residue polypeptide: Isopentenyl-diphosphate Delta-isomerase (187 aa).

Positions 36, 43, and 80 each coordinate Mn(2+). The region spanning 41-178 (VRHRAFTALL…RQLRLCPWFE (138 aa)) is the Nudix hydrolase domain. Glu-98 serves as a coordination point for Mg(2+). Residues Glu-127 and Glu-129 each contribute to the Mn(2+) site. Glu-129 is a catalytic residue.

The protein belongs to the IPP isomerase type 1 family. Mg(2+) is required as a cofactor. It depends on Mn(2+) as a cofactor.

Its subcellular location is the cytoplasm. It carries out the reaction isopentenyl diphosphate = dimethylallyl diphosphate. It functions in the pathway isoprenoid biosynthesis; dimethylallyl diphosphate biosynthesis; dimethylallyl diphosphate from isopentenyl diphosphate: step 1/1. Its function is as follows. Catalyzes the 1,3-allylic rearrangement of the homoallylic substrate isopentenyl (IPP) to its highly electrophilic allylic isomer, dimethylallyl diphosphate (DMAPP). The chain is Isopentenyl-diphosphate Delta-isomerase from Haloarcula marismortui (strain ATCC 43049 / DSM 3752 / JCM 8966 / VKM B-1809) (Halobacterium marismortui).